We begin with the raw amino-acid sequence, 308 residues long: Aspartate carbamoyltransferase catalytic subunit (308 aa).

2 residues coordinate carbamoyl phosphate: R57 and T58. An L-aspartate-binding site is contributed by K86. Carbamoyl phosphate is bound by residues R107, H135, and Q138. L-aspartate contacts are provided by R168 and R229. Residues L268 and P269 each contribute to the carbamoyl phosphate site.

It belongs to the aspartate/ornithine carbamoyltransferase superfamily. ATCase family. As to quaternary structure, heterooligomer of catalytic and regulatory chains.

It carries out the reaction carbamoyl phosphate + L-aspartate = N-carbamoyl-L-aspartate + phosphate + H(+). The protein operates within pyrimidine metabolism; UMP biosynthesis via de novo pathway; (S)-dihydroorotate from bicarbonate: step 2/3. Catalyzes the condensation of carbamoyl phosphate and aspartate to form carbamoyl aspartate and inorganic phosphate, the committed step in the de novo pyrimidine nucleotide biosynthesis pathway. The polypeptide is Aspartate carbamoyltransferase catalytic subunit (Pyrococcus furiosus (strain ATCC 43587 / DSM 3638 / JCM 8422 / Vc1)).